The following is a 404-amino-acid chain: Epoxide hydrolase 1 (404 aa).

A helical membrane pass occupies residues 74-96 (ILVRLLQFYYFVKFSAILFLGFA). The region spanning 140-389 (PLMLFIHGYP…ASHWVQQDEP (250 aa)) is the AB hydrolase-1 domain. Asp215 (nucleophile) is an active-site residue. Catalysis depends on Tyr327, which acts as the Proton donor. His382 (proton acceptor) is an active-site residue.

The protein belongs to the AB hydrolase superfamily. Epoxide hydrolase family.

The protein localises to the membrane. It carries out the reaction an epoxide + H2O = an ethanediol. It catalyses the reaction 8,9-epoxy-(5Z,11Z,14Z)-eicosatrienoate + H2O = 8,9-dihydroxy-(5Z,11Z,14Z)-eicosatrienoate. The catalysed reaction is 11,12-epoxy-(5Z,8Z,14Z)-eicosatrienoate + H2O = 11,12-dihydroxy-(5Z,8Z,14Z)-eicosatrienoate. The enzyme catalyses 14,15-epoxy-(5Z,8Z,11Z)-eicosatrienoate + H2O = 14,15-dihydroxy-(5Z,8Z,11Z)-eicosatrienoate. It carries out the reaction 12,13-epoxy-(9Z)-octadecenoate + H2O = 12,13-dihydroxy-(9Z)-octadecenoate. It catalyses the reaction 9,10-epoxy-(12Z)-octadecenoate + H2O = 9,10-dihydroxy-(12Z)-octadecenoate. The protein operates within lipid metabolism. Its function is as follows. Catalyzes the hydrolysis of epoxide-containing fatty acids. Active against epoxyeicosatrienoic acids (EETs) including 8,9-epoxy-(5Z,11Z,14Z)-eicosatrienoate (8,9-EET), 11,12-epoxy-(5Z,8Z,14Z)-eicosatrienoate (11,12-EET) and 14,15-epoxy-(5Z,8Z,11Z)-eicosatrienoate (14,15-EET) and the linoleic acid metabolites 12,13-epoxy-(9Z)-octadecenoate (12,13-EpOME) and 9,10-epoxy-(12Z)-octadecenoate (9,10-EpOME). These epoxides function as lipid signaling molecules, the enzyme can deplete the supply of the epoxide signal by transforming them into diol species that are more readily eliminated through excretion. The polypeptide is Epoxide hydrolase 1 (Caenorhabditis elegans).